A 445-amino-acid polypeptide reads, in one-letter code: GTPase Der (445 aa).

EngA-type G domains are found at residues 3–167 and 180–353; these read PVIA…YAGQ and IKIA…AAAM. GTP-binding positions include 9-16, 56-60, 119-122, 186-193, 233-237, and 298-301; these read GRPNVGKS, DTGGF, NKAE, DTAGL, and NKWD. In terms of domain architecture, KH-like spans 354-438; sequence AKLPTPKLTR…PLRIEFRSSN (85 aa).

Belongs to the TRAFAC class TrmE-Era-EngA-EngB-Septin-like GTPase superfamily. EngA (Der) GTPase family. Associates with the 50S ribosomal subunit.

Functionally, GTPase that plays an essential role in the late steps of ribosome biogenesis. This chain is GTPase Der, found in Burkholderia ambifaria (strain MC40-6).